The sequence spans 201 residues: Recombination protein RecR (201 aa).

The segment at 57-72 (CADCRTFTEQEVCNIC) adopts a C4-type zinc-finger fold. Residues 81 to 176 (GQICVVESPA…EASRIAHGVP (96 aa)) enclose the Toprim domain.

Belongs to the RecR family.

Functionally, may play a role in DNA repair. It seems to be involved in an RecBC-independent recombinational process of DNA repair. It may act with RecF and RecO. This chain is Recombination protein RecR, found in Shigella boydii serotype 4 (strain Sb227).